Here is a 134-residue protein sequence, read N- to C-terminus: Acyl-CoA thioester hydrolase YbgC (134 aa).

Asp18 is an active-site residue.

The protein belongs to the 4-hydroxybenzoyl-CoA thioesterase family.

Its subcellular location is the cell inner membrane. Functionally, thioesterase that appears to be involved in phospholipid metabolism. Some specific acyl-ACPs could be physiological substrates. Displays acyl-CoA thioesterase activity on malonyl-CoA in vitro, catalyzing the hydrolysis of the thioester bond. In Escherichia coli O157:H7, this protein is Acyl-CoA thioester hydrolase YbgC (ybgC).